A 324-amino-acid chain; its full sequence is MVFSKISQVAHYTPKQVISNDDLSQIMDTSHEWISSRTGIEKRHISTVEMTSDLAIRVAEQLLAGSGYDATALDFIIVATISPDASMPSTAAKVQAAIGATNAFAFDMTAACSGFVFALAMADKLIASGAYQRGLVIGAETLSKIIDWQDRSTAVLFGDGAGGVLLEASEQQHFLAEALHTDGAQGQSLTSGQSSLRSPFSQGQEVNSFLQMDGRAIFDFAIRDVSRSITAIIEQSGLAKEELDYLLLHQANRRILDKMAKKIGMPREKFLENMMHYGNTSAASIPILLSESVQNGQLKLDGSQHILLSGFGGGLTWGSLIVKI.

Active-site residues include Cys112 and His249. The ACP-binding stretch occupies residues 250–254 (QANRR). Asn279 is an active-site residue.

It belongs to the thiolase-like superfamily. FabH family. As to quaternary structure, homodimer.

The protein resides in the cytoplasm. The catalysed reaction is malonyl-[ACP] + acetyl-CoA + H(+) = 3-oxobutanoyl-[ACP] + CO2 + CoA. It functions in the pathway lipid metabolism; fatty acid biosynthesis. In terms of biological role, catalyzes the condensation reaction of fatty acid synthesis by the addition to an acyl acceptor of two carbons from malonyl-ACP. Catalyzes the first condensation reaction which initiates fatty acid synthesis and may therefore play a role in governing the total rate of fatty acid production. Possesses both acetoacetyl-ACP synthase and acetyl transacylase activities. Its substrate specificity determines the biosynthesis of branched-chain and/or straight-chain of fatty acids. In Streptococcus equi subsp. equi (strain 4047), this protein is Beta-ketoacyl-[acyl-carrier-protein] synthase III.